Consider the following 554-residue polypeptide: 2-succinyl-5-enolpyruvyl-6-hydroxy-3-cyclohexene-1-carboxylate synthase (554 aa).

The protein belongs to the TPP enzyme family. MenD subfamily. In terms of assembly, homodimer. The cofactor is Mg(2+). Mn(2+) is required as a cofactor. Thiamine diphosphate serves as cofactor.

It carries out the reaction isochorismate + 2-oxoglutarate + H(+) = 5-enolpyruvoyl-6-hydroxy-2-succinyl-cyclohex-3-ene-1-carboxylate + CO2. The protein operates within quinol/quinone metabolism; 1,4-dihydroxy-2-naphthoate biosynthesis; 1,4-dihydroxy-2-naphthoate from chorismate: step 2/7. Its pathway is quinol/quinone metabolism; menaquinone biosynthesis. In terms of biological role, catalyzes the thiamine diphosphate-dependent decarboxylation of 2-oxoglutarate and the subsequent addition of the resulting succinic semialdehyde-thiamine pyrophosphate anion to isochorismate to yield 2-succinyl-5-enolpyruvyl-6-hydroxy-3-cyclohexene-1-carboxylate (SEPHCHC). In Flavobacterium johnsoniae (strain ATCC 17061 / DSM 2064 / JCM 8514 / BCRC 14874 / CCUG 350202 / NBRC 14942 / NCIMB 11054 / UW101) (Cytophaga johnsonae), this protein is 2-succinyl-5-enolpyruvyl-6-hydroxy-3-cyclohexene-1-carboxylate synthase.